The following is a 544-amino-acid chain: Probable protein kinase UbiB (544 aa).

The region spanning 123–501 (DFDLVPLASA…KRQQATGKFL (379 aa)) is the Protein kinase domain. Residues 129 to 137 (LASASIAQV) and Lys152 contribute to the ATP site. Residue Asp287 is the Proton acceptor of the active site. The next 2 membrane-spanning stretches (helical) occupy residues 496-516 (ATGKFLFGVGATLVVCSAILV) and 519-539 (TYEQLSLATAIAGVTFWLFSW).

It belongs to the ABC1 family. UbiB subfamily.

Its subcellular location is the cell inner membrane. It functions in the pathway cofactor biosynthesis; ubiquinone biosynthesis [regulation]. Functionally, is probably a protein kinase regulator of UbiI activity which is involved in aerobic coenzyme Q (ubiquinone) biosynthesis. The chain is Probable protein kinase UbiB from Vibrio vulnificus (strain CMCP6).